The sequence spans 104 residues: SOSS complex subunit C (104 aa).

Residue A2 is modified to N-acetylalanine.

The protein belongs to the SOSS-C family. In terms of assembly, component of the SOSS complex, composed of SOSS-B (SOSS-B1/NABP2 or SOSS-B2/NABP1), SOSS-A/INTS3 and SOSS-C/INIP. SOSS complexes containing SOSS-B1/NABP2 are more abundant than complexes containing SOSS-B2/NABP1. Interacts with INTS3; the interaction is direct.

Its subcellular location is the nucleus. Functionally, component of the SOSS complex, a multiprotein complex that functions downstream of the MRN complex to promote DNA repair and G2/M checkpoint. The SOSS complex associates with single-stranded DNA at DNA lesions and influences diverse endpoints in the cellular DNA damage response including cell-cycle checkpoint activation, recombinational repair and maintenance of genomic stability. Required for efficient homologous recombination-dependent repair of double-strand breaks (DSBs) and ATM-dependent signaling pathways. The chain is SOSS complex subunit C (INIP) from Bos taurus (Bovine).